Here is a 955-residue protein sequence, read N- to C-terminus: 2-oxoglutarate dehydrogenase E1 component (955 aa).

This sequence belongs to the alpha-ketoglutarate dehydrogenase family. In terms of assembly, homodimer. Part of the 2-oxoglutarate dehydrogenase (OGDH) complex composed of E1 (2-oxoglutarate dehydrogenase), E2 (dihydrolipoamide succinyltransferase) and E3 (dihydrolipoamide dehydrogenase); the complex contains multiple copies of the three enzymatic components (E1, E2 and E3). The cofactor is thiamine diphosphate.

It carries out the reaction N(6)-[(R)-lipoyl]-L-lysyl-[protein] + 2-oxoglutarate + H(+) = N(6)-[(R)-S(8)-succinyldihydrolipoyl]-L-lysyl-[protein] + CO2. Functionally, E1 component of the 2-oxoglutarate dehydrogenase (OGDH) complex which catalyzes the decarboxylation of 2-oxoglutarate, the first step in the conversion of 2-oxoglutarate to succinyl-CoA and CO(2). This chain is 2-oxoglutarate dehydrogenase E1 component, found in Bacillus cereus (strain G9842).